A 391-amino-acid polypeptide reads, in one-letter code: MSKAIKLPQKLMLLGSGELGKEFVIAAQRLGNYVIAVDRYANAPAMQVSDCCEVISMLSADDLEAVVTKYEPDFIIPEIEAIRTEKLQEFEDRGITVIPTAAATNYTMNRDRIRELAHEELGIRTAKYGYAVTLEELIAVSDNIGFPNVVKPVMSSSGKGQSVVATKEEVEKAWDYAIANSRGDSQKVIVEEFINFEIEITLLTIKQWNAPTIFCSPIGHRQERGDYQESWQPAGISEDKILEAQAIAKTVTDALGGAGIFGVEFFITKDEVIFSELSPRPHDTGMVTLISQNLNEFELHLRAILGLPIPKIEQLGFCASAVILASEKLDAPLFTGVAEALAEPDVDIRLFGKPTAHPYRRMGVALAKAENVETAREKATDAASKIHISSQ.

N(1)-(5-phospho-beta-D-ribosyl)glycinamide is bound by residues 18–19 (EL) and Glu-78. Residues Arg-110, Lys-151, 156-161 (SSGKGQ), 191-194 (EEFI), and Glu-199 each bind ATP. In terms of domain architecture, ATP-grasp spans 115-305 (ELAHEELGIR…EFELHLRAIL (191 aa)). Mg(2+) contacts are provided by Glu-264 and Glu-276. Residues Asp-283, Lys-353, and 360–361 (RR) contribute to the N(1)-(5-phospho-beta-D-ribosyl)glycinamide site.

This sequence belongs to the PurK/PurT family. Homodimer.

It catalyses the reaction N(1)-(5-phospho-beta-D-ribosyl)glycinamide + formate + ATP = N(2)-formyl-N(1)-(5-phospho-beta-D-ribosyl)glycinamide + ADP + phosphate + H(+). The protein operates within purine metabolism; IMP biosynthesis via de novo pathway; N(2)-formyl-N(1)-(5-phospho-D-ribosyl)glycinamide from N(1)-(5-phospho-D-ribosyl)glycinamide (formate route): step 1/1. Involved in the de novo purine biosynthesis. Catalyzes the transfer of formate to 5-phospho-ribosyl-glycinamide (GAR), producing 5-phospho-ribosyl-N-formylglycinamide (FGAR). Formate is provided by PurU via hydrolysis of 10-formyl-tetrahydrofolate. The polypeptide is Formate-dependent phosphoribosylglycinamide formyltransferase (Nostoc sp. (strain PCC 7120 / SAG 25.82 / UTEX 2576)).